The sequence spans 96 residues: Small ribosomal subunit protein bS6 (96 aa).

The protein belongs to the bacterial ribosomal protein bS6 family.

Binds together with bS18 to 16S ribosomal RNA. This Streptococcus equi subsp. equi (strain 4047) protein is Small ribosomal subunit protein bS6.